Reading from the N-terminus, the 71-residue chain is Small ribosomal subunit protein bS21 (71 aa).

This sequence belongs to the bacterial ribosomal protein bS21 family.

This chain is Small ribosomal subunit protein bS21, found in Hydrogenovibrio crunogenus (strain DSM 25203 / XCL-2) (Thiomicrospira crunogena).